The following is a 145-amino-acid chain: Large ribosomal subunit protein uL15 (145 aa).

Positions methionine 1–glycine 11 are enriched in polar residues. The interval methionine 1 to phenylalanine 48 is disordered. A compositionally biased stretch (basic residues) spans lysine 14–glycine 26.

This sequence belongs to the universal ribosomal protein uL15 family. As to quaternary structure, part of the 50S ribosomal subunit.

Its function is as follows. Binds to the 23S rRNA. The sequence is that of Large ribosomal subunit protein uL15 from Mycoplasmopsis pulmonis (strain UAB CTIP) (Mycoplasma pulmonis).